A 69-amino-acid polypeptide reads, in one-letter code: Light-harvesting protein B-1015 alpha chain (69 aa).

Residues 2 to 20 are Cytoplasmic-facing; that stretch reads ATEYRTASWKLWLILDPRR. Residues 21-41 traverse the membrane as a helical segment; it reads VLTALFVYLTVIALLIHFGLL. An a bacteriochlorophyll-binding site is contributed by H37. The Periplasmic portion of the chain corresponds to 42–59; that stretch reads STDRLNWWEFQRGLPKAA. Residues 60-69 constitute a propeptide that is removed on maturation; that stretch reads SLVVVPPAVG.

This sequence belongs to the antenna complex alpha subunit family. The core complex is formed by different alpha and beta chains, binding bacteriochlorophyll molecules, and arranged most probably in tetrameric structures disposed around the reaction center. The non-pigmented gamma chains may constitute additional components.

The protein resides in the cell inner membrane. Its function is as follows. Antenna complexes are light-harvesting systems, which transfer the excitation energy to the reaction centers. This chain is Light-harvesting protein B-1015 alpha chain (pufA), found in Blastochloris viridis (Rhodopseudomonas viridis).